A 511-amino-acid chain; its full sequence is DNA nucleotidylexotransferase (511 aa).

Residues 1 to 26 (MDPLQTAHAGPRKKRPRQTGASMAST) form a disordered region. A Nuclear localization signal motif is present at residues 11–17 (PRKKRPR). The 98-residue stretch at 27–124 (PQDVRFQDLV…KPVETTGKHQ (98 aa)) folds into the BRCT domain. Ser-134 carries the post-translational modification Phosphoserine. Residues 151 to 511 (SQYACQRRTT…DYIEPSERNA (361 aa)) form a mediates interaction with DNTTIP2 region. An involved in DNA binding region spans residues 258–262 (VGLKT). Residues 333–338 (GFRRGK) and 342–345 (HDVD) contribute to the a 2'-deoxyribonucleoside 5'-triphosphate site. 3 residues coordinate Mg(2+): Asp-343, Asp-345, and Asp-435. 450–451 (GW) contacts a 2'-deoxyribonucleoside 5'-triphosphate.

The protein belongs to the DNA polymerase type-X family. In terms of assembly, interacts with PRP19 and DNTTIP1. Forms a ternary complex with DNTTIP2 and core histone. Released from this complex by PCNA. Interacts with TRERF1. It depends on Mg(2+) as a cofactor.

Its subcellular location is the nucleus. The enzyme catalyses DNA(n) + a 2'-deoxyribonucleoside 5'-triphosphate = DNA(n+1) + diphosphate. Its function is as follows. Template-independent DNA polymerase which catalyzes the random addition of deoxynucleoside 5'-triphosphate to the 3'-end of a DNA initiator. One of the in vivo functions of this enzyme is the addition of nucleotides at the junction (N region) of rearranged Ig heavy chain and T-cell receptor gene segments during the maturation of B- and T-cells. The sequence is that of DNA nucleotidylexotransferase (DNTT) from Eulemur macaco (Black lemur).